We begin with the raw amino-acid sequence, 171 residues long: Probable deoxyuridine 5'-triphosphate nucleotidohydrolase (171 aa).

Belongs to the dCTP deaminase family. Archaeal dUTPase subfamily.

It catalyses the reaction dUTP + H2O = dUMP + diphosphate + H(+). Its pathway is pyrimidine metabolism; dUMP biosynthesis; dUMP from dCTP (dUTP route): step 2/2. In terms of biological role, this enzyme is involved in nucleotide metabolism: it produces dUMP, the immediate precursor of thymidine nucleotides and it decreases the intracellular concentration of dUTP so that uracil cannot be incorporated into DNA. The protein is Probable deoxyuridine 5'-triphosphate nucleotidohydrolase of Methanosarcina mazei (strain ATCC BAA-159 / DSM 3647 / Goe1 / Go1 / JCM 11833 / OCM 88) (Methanosarcina frisia).